The following is a 444-amino-acid chain: MGKGGNQGEGSTERQAPMPTFRWEEIQKHNLRTDRWLVIDRKVYNVTKWSQRHPGGHRVIGHYSGEDATDAFRAFHLDLDFVGKFLKPLLIGELAPEEPSLDRGKSSQITEDFRALKKTAEDMNLFKTNHLFFFLLLSHIIVMESLAWFILSYFGTGWIPTLVTAFVLATSQAQAGWLQHDYGHLSVYKKSIWNHVVHKFVIGHLKGASANWWNHRHFQHHAKPNIFHKDPDIKSLHVFVLGEWQPLEYGKKKLKYLPYNHQHEYFFLIGPPLLIPMYFQYQIIMTMISRRDWVDLAWAISYYMRFFYTYIPFYGILGALVFLNFIRFLESHWFVWVTQMNHLVMEIDLDHYRDWFSSQLAATCNVEQSFFNDWFSGHLNFQIEHHLFPTMPRHNLHKIAPLVKSLCAKHGIEYQEKPLLRALIDIVSSLKKSGELWLDAYLHK.

Residues 1–21 (MGKGGNQGEGSTERQAPMPTF) are disordered. Over 1–130 (MGKGGNQGEG…EDMNLFKTNH (130 aa)) the chain is Cytoplasmic. A Cytochrome b5 heme-binding domain is found at 18-95 (MPTFRWEEIQ…LKPLLIGELA (78 aa)). Residues 131 to 151 (LFFFLLLSHIIVMESLAWFIL) traverse the membrane as a helical segment. Residue S152 is a topological domain, lumenal. Residues 153 to 173 (YFGTGWIPTLVTAFVLATSQA) form a helical membrane-spanning segment. Residues 174–264 (QAGWLQHDYG…KYLPYNHQHE (91 aa)) lie on the Cytoplasmic side of the membrane. The Histidine box-1 motif lies at 180–184 (HDYGH). Residues 217 to 221 (HFQHH) carry the Histidine box-2 motif. A helical transmembrane segment spans residues 265 to 285 (YFFLIGPPLLIPMYFQYQIIM). The Lumenal portion of the chain corresponds to 286 to 305 (TMISRRDWVDLAWAISYYMR). The chain crosses the membrane as a helical span at residues 306–326 (FFYTYIPFYGILGALVFLNFI). At 327–444 (RFLESHWFVW…ELWLDAYLHK (118 aa)) the chain is on the cytoplasmic side. The Histidine box-3 signature appears at 382–386 (QIEHH).

This sequence belongs to the fatty acid desaturase type 1 family. As to expression, highly expressed in the adrenal gland, liver, brain, and testis, tissues where lipogenesis and steroidogenesis are active. Also detected in lung, heart, and skeletal muscle.

The protein resides in the endoplasmic reticulum membrane. It catalyses the reaction (9Z,12Z)-octadecadienoyl-CoA + 2 Fe(II)-[cytochrome b5] + O2 + 2 H(+) = (6Z,9Z,12Z)-octadecatrienoyl-CoA + 2 Fe(III)-[cytochrome b5] + 2 H2O. The catalysed reaction is (9Z,12Z,15Z)-octadecatrienoyl-CoA + 2 Fe(II)-[cytochrome b5] + O2 + 2 H(+) = (6Z,9Z,12Z,15Z)-octadecatetraenoyl-CoA + 2 Fe(III)-[cytochrome b5] + 2 H2O. It carries out the reaction (9Z,12Z,15Z,18Z,21Z)-tetracosapentaenoyl-CoA + 2 Fe(II)-[cytochrome b5] + O2 + 2 H(+) = (6Z,9Z,12Z,15Z,18Z,21Z)-tetracosahexaenoyl-CoA + 2 Fe(III)-[cytochrome b5] + 2 H2O. The enzyme catalyses (11E)-octadecenoyl-CoA + 2 Fe(II)-[cytochrome b5] + O2 + 2 H(+) = (6Z,11E)-octadecadienoyl-CoA + 2 Fe(III)-[cytochrome b5] + 2 H2O. It catalyses the reaction (11Z,14Z)-eicosadienoyl-CoA + 2 Fe(II)-[cytochrome b5] + O2 + 2 H(+) = (8Z,11Z,14Z)-eicosatrienoyl-CoA + 2 Fe(III)-[cytochrome b5] + 2 H2O. The catalysed reaction is (11Z,14Z,17Z)-eicosatrienoyl-CoA + 2 Fe(II)-[cytochrome b5] + O2 + 2 H(+) = (8Z,11Z,14Z,17Z)-eicosatetraenoyl-CoA + 2 Fe(III)-[cytochrome b5] + 2 H2O. The protein operates within lipid metabolism; polyunsaturated fatty acid biosynthesis. Functionally, involved in the biosynthesis of highly unsaturated fatty acids (HUFA) from the essential polyunsaturated fatty acids (PUFA) linoleic acid (LA) (18:2n-6) and alpha-linolenic acid (ALA) (18:3n-3) precursors, acting as a fatty acyl-coenzyme A (CoA) desaturase that introduces a cis double bond at carbon 6 of the fatty acyl chain. Catalyzes the first and rate limiting step in this pathway which is the desaturation of LA (18:2n-6) and ALA (18:3n-3) into gamma-linoleate (GLA) (18:3n-6) and stearidonate (18:4n-3), respectively. Subsequently, in the biosynthetic pathway of HUFA n-3 series, it desaturates tetracosapentaenoate (24:5n-3) to tetracosahexaenoate (24:6n-3), which is then converted to docosahexaenoate (DHA)(22:6n-3), an important lipid for nervous system function. It can also desaturate (11E)-octadecenoate (trans-vaccenoate) at carbon 6 generating (6Z,11E)-octadecadienoate. In addition to Delta-6 activity, this enzyme exhibits Delta-8 activity with slight biases toward n-3 fatty acyl-CoA substrates. The protein is Acyl-CoA 6-desaturase of Mus musculus (Mouse).